Here is a 320-residue protein sequence, read N- to C-terminus: ATP-dependent 6-phosphofructokinase (320 aa).

Residue G12 coordinates ATP. ADP is bound by residues 22–26 (RGVVR) and 55–60 (RYSVSD). ATP-binding positions include 73–74 (RF) and 103–106 (GDGS). D104 contacts Mg(2+). 126–128 (TID) contacts substrate. The active-site Proton acceptor is D128. An ADP-binding site is contributed by R155. Substrate contacts are provided by residues R163 and 170-172 (MGR). Residues 186-188 (GCE), K212, and 214-216 (KKH) contribute to the ADP site. Substrate is bound by residues E223, R244, and 250 to 253 (HIQR).

Belongs to the phosphofructokinase type A (PFKA) family. ATP-dependent PFK group I subfamily. Prokaryotic clade 'B1' sub-subfamily. In terms of assembly, homotetramer. Mg(2+) serves as cofactor.

The protein localises to the cytoplasm. It catalyses the reaction beta-D-fructose 6-phosphate + ATP = beta-D-fructose 1,6-bisphosphate + ADP + H(+). It functions in the pathway carbohydrate degradation; glycolysis; D-glyceraldehyde 3-phosphate and glycerone phosphate from D-glucose: step 3/4. Its activity is regulated as follows. Allosterically activated by ADP and other diphosphonucleosides, and allosterically inhibited by phosphoenolpyruvate. In terms of biological role, catalyzes the phosphorylation of D-fructose 6-phosphate to fructose 1,6-bisphosphate by ATP, the first committing step of glycolysis. The chain is ATP-dependent 6-phosphofructokinase from Cronobacter sakazakii (strain ATCC BAA-894) (Enterobacter sakazakii).